The primary structure comprises 33 residues: Alpha-amanitin proprotein (33 aa).

A propeptide spanning residues 1–10 is cleaved from the precursor; sequence MSDINATRLP. At isoleucine 11 the chain carries (3R,4R)-4,5-dihydroxyisoleucine; in form alpha-amanitin. Isoleucine 11 carries the post-translational modification (3R,4S)-4-hydroxyisoleucine; in form gamma-amanitin. A cross-link (cyclopeptide (Ile-Pro)) is located at residues 11–18; it reads IWGIGCNP. Residues 12 to 16 constitute a cross-link (2'-cysteinyl-6'-hydroxytryptophan sulfoxide (Trp-Cys)); the sequence is WGIGC. The residue at position 18 (proline 18) is a 4-hydroxyproline. Positions 19–33 are excised as a propeptide; the sequence is CVGDEVTALITRGEA.

It belongs to the MSDIN fungal toxin family. In terms of processing, processed by the macrocyclase-peptidase enzyme POPB to yield a toxic cyclic decapeptide. POPB first removes 10 residues from the N-terminus. Conformational trapping of the remaining peptide forces the enzyme to release this intermediate rather than proceed to macrocyclization. The enzyme rebinds the remaining peptide in a different conformation and catalyzes macrocyclization of the N-terminal 8 residues.

Its function is as follows. Major toxin belonging to the bicyclic octapeptides amatoxins that acts by binding non-competitively to RNA polymerase II and greatly slowing the elongation of transcripts from target promoters. The polypeptide is Alpha-amanitin proprotein (Amanita pallidorosea).